Consider the following 263-residue polypeptide: uncharacterized protein (263 aa).

An N-terminal signal peptide occupies residues 1–22 (MEYLKRLALLISVIILTIFIMG). A lipid anchor (N-palmitoyl cysteine) is attached at Cys23. A lipid anchor (S-diacylglycerol cysteine) is attached at Cys23.

This sequence belongs to the staphylococcal tandem lipoprotein family.

It is found in the cell membrane. This is an uncharacterized protein from Staphylococcus aureus (strain COL).